The primary structure comprises 187 residues: Adenine phosphoribosyltransferase (187 aa).

This sequence belongs to the purine/pyrimidine phosphoribosyltransferase family. As to quaternary structure, homodimer.

The protein resides in the cytoplasm. It carries out the reaction AMP + diphosphate = 5-phospho-alpha-D-ribose 1-diphosphate + adenine. It participates in purine metabolism; AMP biosynthesis via salvage pathway; AMP from adenine: step 1/1. Functionally, catalyzes a salvage reaction resulting in the formation of AMP, that is energically less costly than de novo synthesis. The chain is Adenine phosphoribosyltransferase from Yersinia enterocolitica serotype O:8 / biotype 1B (strain NCTC 13174 / 8081).